A 241-amino-acid polypeptide reads, in one-letter code: Terpene cyclase pyr4 (241 aa).

The next 7 membrane-spanning stretches (helical) occupy residues 20–40, 49–69, 79–99, 113–133, 141–161, 168–188, and 206–226; these read IADW…LAMI, YGMA…YSVI, AVLT…IKFA, LPWI…ALAA, ANWG…CQLM, GASY…GIFL, and FVTW…TFLW.

This sequence belongs to the paxB family.

Its subcellular location is the membrane. The enzyme catalyses 2-oxo-3-[(8S)-epoxy-(2E,6E)-farnesyl]-6-(pyridin-3-yl)-2H-pyran-4-olate + H(+) = deacetylpyripyropene E. It functions in the pathway secondary metabolite biosynthesis; terpenoid biosynthesis. Its function is as follows. Terpene cyclase; part of the gene cluster that mediates the biosynthesis of pyripyropene A, a specific human acyl-coenzyme A:cholesterol acyltransferase 2 inhibitor. The first step of the pathway is the synthesis of nicotinyl-CoA from nicotinic acid by the nicotinic acid-CoA ligase pyr1. Nicotinyl-CoA is then a substrate of polyketide synthase pyr2 to produce 4-hydroxy-6-(3-pyridinyl)-2H-pyran-2-one (HPPO) which is further prenylated by the polyprenyl transferase pyr6 to yield farnesyl-HPPO. The next steps consist of an epoxidation of farnesyl-HPPO to epoxyfarnesyl-HPPO by FAD-dependent monooxygenase pyr5 and a cyclization of the terpenoid portion by the terpene cyclase pyr4 to yield deacetyl-pyripyropene E. The 2 cytochrome P450 monooxygenases pyr3 and pyr9, and the 2 acetyltransferases pyr7 and pyr8 are involved in the conversion of deacetyl-pyripyropene E into pyripyropene A through several cycles of oxidation and acetylation steps. Pyr7 acetylates deacetyl-pyripyropene E to pyripyropene E which is oxidized to 11-deacetyl-pyripyropene O by pyr3, which is in turn acetylated into pyripyropene O by pyr8. Pyripyropene O is then oxidized to deacetyl-pyripyropene A by pyr9. Deacetyl-pyripyropene A is finally acetylated to pyripyropene A by pyr8. The sequence is that of Terpene cyclase pyr4 from Aspergillus fumigatus (strain ATCC MYA-4609 / CBS 101355 / FGSC A1100 / Af293) (Neosartorya fumigata).